A 91-amino-acid chain; its full sequence is Small ribosomal subunit protein bS18 (91 aa).

A disordered region spans residues 1-27 (MTQQSNTERKPRAKGPKRPRKPKVDPF). Residues 11 to 21 (PRAKGPKRPRK) show a composition bias toward basic residues.

It belongs to the bacterial ribosomal protein bS18 family. Part of the 30S ribosomal subunit. Forms a tight heterodimer with protein bS6.

Its function is as follows. Binds as a heterodimer with protein bS6 to the central domain of the 16S rRNA, where it helps stabilize the platform of the 30S subunit. The chain is Small ribosomal subunit protein bS18 from Deinococcus geothermalis (strain DSM 11300 / CIP 105573 / AG-3a).